A 333-amino-acid chain; its full sequence is Ketol-acid reductoisomerase (NADP(+)) (333 aa).

Residues 6-186 (TRVYTECDAD…GALRAGAIQT (181 aa)) enclose the KARI N-terminal Rossmann domain. NADP(+)-binding positions include 29–32 (YGSQ), Lys52, Ser55, Ser57, and 87–90 (DPAQ). Residue His112 is part of the active site. Gly138 lines the NADP(+) pocket. One can recognise a KARI C-terminal knotted domain in the interval 187–332 (TFTEETETDL…ARLRALFSWS (146 aa)). Mg(2+) contacts are provided by Asp195, Glu199, Glu231, and Glu235. Ser256 serves as a coordination point for substrate.

This sequence belongs to the ketol-acid reductoisomerase family. Mg(2+) serves as cofactor.

It carries out the reaction (2R)-2,3-dihydroxy-3-methylbutanoate + NADP(+) = (2S)-2-acetolactate + NADPH + H(+). It catalyses the reaction (2R,3R)-2,3-dihydroxy-3-methylpentanoate + NADP(+) = (S)-2-ethyl-2-hydroxy-3-oxobutanoate + NADPH + H(+). The protein operates within amino-acid biosynthesis; L-isoleucine biosynthesis; L-isoleucine from 2-oxobutanoate: step 2/4. It functions in the pathway amino-acid biosynthesis; L-valine biosynthesis; L-valine from pyruvate: step 2/4. Functionally, involved in the biosynthesis of branched-chain amino acids (BCAA). Catalyzes an alkyl-migration followed by a ketol-acid reduction of (S)-2-acetolactate (S2AL) to yield (R)-2,3-dihydroxy-isovalerate. In the isomerase reaction, S2AL is rearranged via a Mg-dependent methyl migration to produce 3-hydroxy-3-methyl-2-ketobutyrate (HMKB). In the reductase reaction, this 2-ketoacid undergoes a metal-dependent reduction by NADPH to yield (R)-2,3-dihydroxy-isovalerate. In Tropheryma whipplei (strain TW08/27) (Whipple's bacillus), this protein is Ketol-acid reductoisomerase (NADP(+)).